The sequence spans 331 residues: Phenylalanine--tRNA ligase alpha subunit (331 aa).

E256 provides a ligand contact to Mg(2+).

Belongs to the class-II aminoacyl-tRNA synthetase family. Phe-tRNA synthetase alpha subunit type 1 subfamily. In terms of assembly, tetramer of two alpha and two beta subunits. Mg(2+) is required as a cofactor.

Its subcellular location is the cytoplasm. It catalyses the reaction tRNA(Phe) + L-phenylalanine + ATP = L-phenylalanyl-tRNA(Phe) + AMP + diphosphate + H(+). The sequence is that of Phenylalanine--tRNA ligase alpha subunit from Colwellia psychrerythraea (strain 34H / ATCC BAA-681) (Vibrio psychroerythus).